Reading from the N-terminus, the 278-residue chain is Large ribosomal subunit protein uL2 (278 aa).

Residues 223–278 (GSVMNPNDHPHGGGEGKAPIGHPSPMSPWGKKTLGKKTRDHKAKSEKFIVRHRRAK) form a disordered region. Residues 255 to 264 (TLGKKTRDHK) are compositionally biased toward basic residues.

This sequence belongs to the universal ribosomal protein uL2 family. Part of the 50S ribosomal subunit. Forms a bridge to the 30S subunit in the 70S ribosome.

Functionally, one of the primary rRNA binding proteins. Required for association of the 30S and 50S subunits to form the 70S ribosome, for tRNA binding and peptide bond formation. It has been suggested to have peptidyltransferase activity; this is somewhat controversial. Makes several contacts with the 16S rRNA in the 70S ribosome. The chain is Large ribosomal subunit protein uL2 from Lacticaseibacillus paracasei (strain ATCC 334 / BCRC 17002 / CCUG 31169 / CIP 107868 / KCTC 3260 / NRRL B-441) (Lactobacillus paracasei).